Consider the following 452-residue polypeptide: uncharacterized protein (452 aa).

This is an uncharacterized protein from Acanthamoeba polyphaga (Amoeba).